A 557-amino-acid chain; its full sequence is CTP synthase (557 aa).

The interval 1–270 (MTKYVFVTGG…DAIICEELKL (270 aa)) is amidoligase domain. Residue Ser13 coordinates CTP. Ser13 contributes to the UTP binding site. Residues 14 to 19 (SLGKGI) and Asp71 each bind ATP. Asp71 and Glu144 together coordinate Mg(2+). Residues 151-153 (DIE), 191-196 (KTKPTQ), and Lys227 contribute to the CTP site. UTP-binding positions include 191 to 196 (KTKPTQ) and Lys227. The Glutamine amidotransferase type-1 domain maps to 295-547 (TIGMVGKYVD…VEAALAHQQS (253 aa)). Gly356 provides a ligand contact to L-glutamine. Cys383 (nucleophile; for glutamine hydrolysis) is an active-site residue. Residues 384 to 387 (LGMQ), Glu407, and Arg473 contribute to the L-glutamine site. Catalysis depends on residues His520 and Glu522.

It belongs to the CTP synthase family. As to quaternary structure, homotetramer.

It carries out the reaction UTP + L-glutamine + ATP + H2O = CTP + L-glutamate + ADP + phosphate + 2 H(+). The catalysed reaction is L-glutamine + H2O = L-glutamate + NH4(+). The enzyme catalyses UTP + NH4(+) + ATP = CTP + ADP + phosphate + 2 H(+). The protein operates within pyrimidine metabolism; CTP biosynthesis via de novo pathway; CTP from UDP: step 2/2. Allosterically activated by GTP, when glutamine is the substrate; GTP has no effect on the reaction when ammonia is the substrate. The allosteric effector GTP functions by stabilizing the protein conformation that binds the tetrahedral intermediate(s) formed during glutamine hydrolysis. Inhibited by the product CTP, via allosteric rather than competitive inhibition. Its function is as follows. Catalyzes the ATP-dependent amination of UTP to CTP with either L-glutamine or ammonia as the source of nitrogen. Regulates intracellular CTP levels through interactions with the four ribonucleotide triphosphates. In Paraburkholderia xenovorans (strain LB400), this protein is CTP synthase.